A 75-amino-acid polypeptide reads, in one-letter code: UPF0181 protein ETA_15280 (75 aa).

Belongs to the UPF0181 family.

This Erwinia tasmaniensis (strain DSM 17950 / CFBP 7177 / CIP 109463 / NCPPB 4357 / Et1/99) protein is UPF0181 protein ETA_15280.